Reading from the N-terminus, the 132-residue chain is Major pollen allergen Art v 1 (132 aa).

An N-terminal signal peptide occupies residues 1–24; that stretch reads MAKCSYVFCAVLLIFIVAIGEMEA. The interval 28 to 77 is defensin-like domain; sequence KLCEKTSKTYSGKCDNKKCDKKCIEWEKAQHGACHKREAGKESCFCYFDC. 4 cysteine pairs are disulfide-bonded: cysteine 30–cysteine 77, cysteine 41–cysteine 61, cysteine 46–cysteine 71, and cysteine 50–cysteine 73. Epitope recognized by IgE antibodies of mugwort pollen-sensitized patients regions lie at residues 64–70 and 79–87; these read REAGKES and KSPPGATPA. Residues 81–132 form a disordered region; sequence PPGATPAPPGAAPPPAAGGSPSPPADGGSPPPPADGGSPPVDGGSPPPPSTH. Positions 83-114 are enriched in pro residues; sequence GATPAPPGAAPPPAAGGSPSPPADGGSPPPPA. The span at 115-124 shows a compositional bias: low complexity; the sequence is DGGSPPVDGG.

This sequence in the N-terminal section; belongs to the DEFL family. Post-translationally, the mature protein extracted from the plant exhibits an average rate of 76% of hydroxyprolines. O-glycosylated. O-linkage of 3 galactoses plus 9-16 or 21-23 arabinose residues attached on one or two hydroxyprolines.

It localises to the secreted. This is Major pollen allergen Art v 1 from Artemisia vulgaris (Mugwort).